We begin with the raw amino-acid sequence, 479 residues long: Octopamine receptor (479 aa).

The Extracellular segment spans residues methionine 1–threonine 57. 2 N-linked (GlcNAc...) asparagine glycosylation sites follow: asparagine 11 and asparagine 16. The helical transmembrane segment at alanine 58–phenylalanine 80 threads the bilayer. At threonine 81–asparagine 90 the chain is on the cytoplasmic side. The helical transmembrane segment at phenylalanine 91–valine 112 threads the bilayer. Residues alanine 113–methionine 129 are Extracellular-facing. The chain crosses the membrane as a helical span at residues tryptophan 130–leucine 150. At aspartate 151–arginine 170 the chain is on the cytoplasmic side. Residues valine 171 to tryptophan 193 form a helical membrane-spanning segment. Over asparagine 194–serine 218 the chain is Extracellular. The chain crosses the membrane as a helical span at residues serine 219 to alanine 240. The Cytoplasmic portion of the chain corresponds to threonine 241–threonine 407. The interval glycine 260 to aspartate 319 is disordered. Positions glutamine 274–glutamine 287 are enriched in polar residues. The span at lysine 299–tyrosine 315 shows a compositional bias: basic residues. A helical membrane pass occupies residues leucine 408 to isoleucine 429. At proline 430–phenylalanine 441 the chain is on the extracellular side. The helical transmembrane segment at isoleucine 442 to isoleucine 462 threads the bilayer. At phenylalanine 463–cysteine 479 the chain is on the cytoplasmic side.

It belongs to the G-protein coupled receptor 1 family.

Its subcellular location is the cell membrane. Receptor for octopamine. Octopamine (OA) is a neurotransmitter, neurohormone, and neuromodulator in invertebrates. The activity of this receptor is mediated by G proteins which activate adenylyl cyclase. This is Octopamine receptor from Bombyx mori (Silk moth).